The sequence spans 467 residues: Methylenetetrahydrofolate--tRNA-(uracil-5-)-methyltransferase TrmFO (467 aa).

Residue 10–15 (GAGLAG) participates in FAD binding.

The protein belongs to the MnmG family. TrmFO subfamily. It depends on FAD as a cofactor.

The protein resides in the cytoplasm. The catalysed reaction is uridine(54) in tRNA + (6R)-5,10-methylene-5,6,7,8-tetrahydrofolate + NADH + H(+) = 5-methyluridine(54) in tRNA + (6S)-5,6,7,8-tetrahydrofolate + NAD(+). It carries out the reaction uridine(54) in tRNA + (6R)-5,10-methylene-5,6,7,8-tetrahydrofolate + NADPH + H(+) = 5-methyluridine(54) in tRNA + (6S)-5,6,7,8-tetrahydrofolate + NADP(+). Its function is as follows. Catalyzes the folate-dependent formation of 5-methyl-uridine at position 54 (M-5-U54) in all tRNAs. In Prochlorococcus marinus (strain MIT 9515), this protein is Methylenetetrahydrofolate--tRNA-(uracil-5-)-methyltransferase TrmFO.